The sequence spans 473 residues: MKILYSPRRFYPVETLFNGTLALGGRDQETTGFAWWAGNARLINLSGKLLGAHVAHGGLIVFWAGAMNLFEVAHFVPEKPMYEQGLILLPHLATLGWGVGPGGEVVDIFPYFVSGVLHLISSAVLGFGGIYHAIIGPETLEESFPFFGYAWKDKNKMTTILGIHLILLGAGAFLSVLKALYFGGVYDTWAPGGGDVRKITNLTLNPSVVFGYLLKSPFGGEGWIVSVDNLEDIIGGHVWLGSICIFGGIWHISTKPFAWARRAFVWSGEAYLSYSLGALSVFGFIACCFAWFNNTAYPSEFYGPTGPEASQAQAFTFLVRDQRLGANVGSAQGPTGLGKYLMRSPTGEIIFGGETMRFWDLRAPWLEPLRGPNGLDLSKLKKDIQPWQERRSAEYMTHAPLGSLNSVGGVATEINAVNYVSPRSWLATSHFVSGFFFFVGHLWHAGRARAAAAGFEKGIDRDFEPVLSTTPLN.

Positions 1–14 (MKILYSPRRFYPVE) are excised as a propeptide. Threonine 15 bears the N-acetylthreonine mark. Threonine 15 bears the Phosphothreonine mark. Transmembrane regions (helical) follow at residues 69 to 93 (LFEV…PHLA), 134 to 155 (IIGP…KDKN), 178 to 200 (KALY…RKIT), 255 to 275 (KPFA…LSYS), and 291 to 312 (WFNN…ASQA). A [CaMn4O5] cluster-binding site is contributed by glutamate 367. The chain crosses the membrane as a helical span at residues 447 to 471 (RARAAAAGFEKGIDRDFEPVLSTTP).

This sequence belongs to the PsbB/PsbC family. PsbC subfamily. PSII is composed of 1 copy each of membrane proteins PsbA, PsbB, PsbC, PsbD, PsbE, PsbF, PsbH, PsbI, PsbJ, PsbK, PsbL, PsbM, PsbT, PsbX, PsbY, PsbZ, Psb30/Ycf12, at least 3 peripheral proteins of the oxygen-evolving complex and a large number of cofactors. It forms dimeric complexes. The cofactor is Binds multiple chlorophylls and provides some of the ligands for the Ca-4Mn-5O cluster of the oxygen-evolving complex. It may also provide a ligand for a Cl- that is required for oxygen evolution. PSII binds additional chlorophylls, carotenoids and specific lipids..

The protein resides in the plastid. The protein localises to the chloroplast thylakoid membrane. Functionally, one of the components of the core complex of photosystem II (PSII). It binds chlorophyll and helps catalyze the primary light-induced photochemical processes of PSII. PSII is a light-driven water:plastoquinone oxidoreductase, using light energy to abstract electrons from H(2)O, generating O(2) and a proton gradient subsequently used for ATP formation. This is Photosystem II CP43 reaction center protein from Huperzia lucidula (Shining clubmoss).